A 135-amino-acid chain; its full sequence is ATP synthase epsilon chain (135 aa).

Belongs to the ATPase epsilon chain family. As to quaternary structure, F-type ATPases have 2 components, CF(1) - the catalytic core - and CF(0) - the membrane proton channel. CF(1) has five subunits: alpha(3), beta(3), gamma(1), delta(1), epsilon(1). CF(0) has three main subunits: a, b and c.

It localises to the cell inner membrane. In terms of biological role, produces ATP from ADP in the presence of a proton gradient across the membrane. The sequence is that of ATP synthase epsilon chain from Chelativorans sp. (strain BNC1).